We begin with the raw amino-acid sequence, 467 residues long: Dimethylamine methyltransferase MtbB3 (467 aa).

A non-standard amino acid (pyrrolysine) is located at residue Pyl-356.

It belongs to the dimethylamine methyltransferase family.

It catalyses the reaction Co(I)-[dimethylamine-specific corrinoid protein] + dimethylamine + H(+) = methyl-Co(III)-[dimethylamine-specific corrinoid protein] + methylamine. It participates in one-carbon metabolism; methanogenesis from dimethylamine. Its function is as follows. Catalyzes the transfer of a methyl group from dimethylamine to the corrinoid cofactor of MtbC. This chain is Dimethylamine methyltransferase MtbB3 (mtbB3), found in Methanosarcina mazei (strain ATCC BAA-159 / DSM 3647 / Goe1 / Go1 / JCM 11833 / OCM 88) (Methanosarcina frisia).